The following is a 647-amino-acid chain: Threonine--tRNA ligase (647 aa).

The 63-residue stretch at 1 to 63 folds into the TGS domain; the sequence is MEVRVEGQMV…PAGCTGIEPV (63 aa). The segment at 244-535 is catalytic; that stretch reads DHRKLGRELS…LVENFAGALP (292 aa). Cys-336, His-387, and His-512 together coordinate Zn(2+).

Belongs to the class-II aminoacyl-tRNA synthetase family. In terms of assembly, homodimer. The cofactor is Zn(2+).

It localises to the cytoplasm. The catalysed reaction is tRNA(Thr) + L-threonine + ATP = L-threonyl-tRNA(Thr) + AMP + diphosphate + H(+). Its function is as follows. Catalyzes the attachment of threonine to tRNA(Thr) in a two-step reaction: L-threonine is first activated by ATP to form Thr-AMP and then transferred to the acceptor end of tRNA(Thr). Also edits incorrectly charged L-seryl-tRNA(Thr). In Desulfovibrio desulfuricans (strain ATCC 27774 / DSM 6949 / MB), this protein is Threonine--tRNA ligase.